Consider the following 331-residue polypeptide: Dioxygenase swnH2 (331 aa).

A compositionally biased stretch (polar residues) spans 1-11; it reads MINSDAQSAQK. The segment at 1–31 is disordered; it reads MINSDAQSAQKQVEVEKPDEKYSAPRLLPPI. Over residues 13 to 23 the composition is skewed to basic and acidic residues; sequence VEVEKPDEKYS. Positions 173, 175, and 250 each coordinate Fe cation.

Belongs to the PhyH family. In terms of assembly, homodimer. It depends on Fe cation as a cofactor.

It functions in the pathway mycotoxin biosynthesis. Dioxygenase; part of the gene cluster that mediates the biosynthesis of swainsonine (SW), a cytotoxic fungal alkaloid and a potential cancer therapy drug. Swainsonine production occurs via a multibranched pathway and is dispensable for fungal colonization of plants and infection of insect hosts. The first step of swainsonine biosynthesis is the production of the precursor pipecolic acid (PA) via conversion of L-lysine (Lys) to 1-piperideine-6-carboxylate (P6C) by the aminotransferase swnA, the latter being further reduced to PA by the reductase swnR. PA can be converted from lysine by both the SW biosynthetic cluster and the unclustered genes such as lysine cyclodeaminase. The PKS-NRPS hybrid synthetase swnK uptakes and condensates PA and malonyl-CoA with and without skipping of the ketoreductase (KR) domain in order to produce 3 intermediates, 1-oxoindolizidine, (1S)-1-hydroxyindolizin, and (1R)-1-hydroxyindolizine; with the transisomer (1S)-1-hydroxyindolizin being predominant. The terminal thioester reductase (TE) domain of swnK is involved in reduction of the thioester bond to release the intermediate aldehydes. The oxidoreductase swnN could contribute to the reduction of 1-oxoindolizidine to (1S)-1-hydroxyindolizin and (1R)-1-hydroxyindolizine, contributing to the major route of SW production. The dioxygenase swnH2 would be responsible for the oxidization of (1R)-1-hydroxyindolizine into (1R,2S)-1,2-dihydroxyindolizine and of (1S)-1-hydroxyindolizin to yield both (1R,2S)-1,2-dihydroxyindolizine and (1S,2S)-1,2-dihydroxyindolizine. The dioxygenase swnH1 then performs the conversion of the 1,2-dihydroxyindolizine epimers to SW. This Metarhizium robertsii (strain ARSEF 23 / ATCC MYA-3075) (Metarhizium anisopliae (strain ARSEF 23)) protein is Dioxygenase swnH2.